The chain runs to 254 residues: MILVIDVGNTNTVLGVYQDETLVHHWRLATSRQKTEDEYAMTVRSLFDHAGLQFQDIDGIVISSVVPPMMFSLEQMCKKYFHVTPMIIGPGIKTGLNIKYDNPKEVGADRIVNAVAAIELYGYPAIVVDFGTATTYCLINEKKQYAGGVIAPGIMISTEALYHRASKLPRIEIAKPKQVVGTNTIDSMQSGIFYGYVSQVDGVVKRMKAQAESEPKVIATGGLAKLIGTESETIDVIDSFLTLKGLQLIYKKNV.

6 to 13 is an ATP binding site; the sequence is DVGNTNTV. Residues tyrosine 100 and 107–110 contribute to the substrate site; that span reads GADR. Aspartate 109 serves as the catalytic Proton acceptor. Residue aspartate 129 coordinates K(+). Threonine 132 lines the ATP pocket. Substrate is bound at residue threonine 184.

The protein belongs to the type III pantothenate kinase family. Homodimer. NH4(+) serves as cofactor. The cofactor is K(+).

The protein resides in the cytoplasm. The enzyme catalyses (R)-pantothenate + ATP = (R)-4'-phosphopantothenate + ADP + H(+). Its pathway is cofactor biosynthesis; coenzyme A biosynthesis; CoA from (R)-pantothenate: step 1/5. Functionally, catalyzes the phosphorylation of pantothenate (Pan), the first step in CoA biosynthesis. The polypeptide is Type III pantothenate kinase (Halalkalibacterium halodurans (strain ATCC BAA-125 / DSM 18197 / FERM 7344 / JCM 9153 / C-125) (Bacillus halodurans)).